The following is a 377-amino-acid chain: Flagellin D (377 aa).

The stretch at 104-128 forms a coiled coil; sequence NSKADRVAIQEEVTALNDELNRIAE.

Belongs to the bacterial flagellin family. Heteromer of multiple flagellin subunits including FlaA, FlaB, FlaC, FlaD and possibly FlaE.

It is found in the secreted. Its subcellular location is the bacterial flagellum. In terms of biological role, flagellin is the subunit protein which polymerizes to form the filaments of bacterial flagella. FlaD is not essential for flagellar synthesis and motility. May have a role in virulence unrelated to motility. The polypeptide is Flagellin D (flaD) (Vibrio anguillarum (Listonella anguillarum)).